Here is a 226-residue protein sequence, read N- to C-terminus: Chalcone--flavanone isomerase (226 aa).

The substrate site is built by Thr-51, Asn-116, and Ser-194.

The protein belongs to the chalcone isomerase family.

The catalysed reaction is a chalcone = a flavanone.. It participates in secondary metabolite biosynthesis; flavonoid biosynthesis. In terms of biological role, catalyzes the intramolecular cyclization of bicyclic chalcones into tricyclic (S)-flavanones. Responsible for the isomerization of 4,2',4',6'-tetrahydroxychalcone (also termed chalcone) into naringenin. The polypeptide is Chalcone--flavanone isomerase (CHI) (Canna generalis (Canna lily)).